A 256-amino-acid polypeptide reads, in one-letter code: Chlorophyll a-b binding protein CP24 10A, chloroplastic (256 aa).

Helical transmembrane passes span 106–126 (WAMA…IPWF) and 134–154 (AIAP…MGWV).

It belongs to the ELIP/psbS family.

The protein resides in the plastid. Its subcellular location is the chloroplast thylakoid membrane. This Solanum lycopersicum (Tomato) protein is Chlorophyll a-b binding protein CP24 10A, chloroplastic (CAP10A).